We begin with the raw amino-acid sequence, 131 residues long: MVEVEKSDAEWRAQLTDEQYAVCRQGGTEQPFSGAYYHCKEPGTYHCVCCDAPLFSSRAKYDSGSGWPSFWAPISDDHLRILEDRSLGMVREEVRCARCDAHLGHVFPDGPMPTGLRYCINSVCLDLKRSG.

Residues 8 to 130 (DAEWRAQLTD…NSVCLDLKRS (123 aa)) enclose the MsrB domain. 4 residues coordinate Zn(2+): cysteine 47, cysteine 50, cysteine 96, and cysteine 99. The active-site Nucleophile is cysteine 119.

It belongs to the MsrB Met sulfoxide reductase family. Zn(2+) serves as cofactor.

The catalysed reaction is L-methionyl-[protein] + [thioredoxin]-disulfide + H2O = L-methionyl-(R)-S-oxide-[protein] + [thioredoxin]-dithiol. The sequence is that of Peptide methionine sulfoxide reductase MsrB from Alkalilimnicola ehrlichii (strain ATCC BAA-1101 / DSM 17681 / MLHE-1).